Consider the following 519-residue polypeptide: Transketolase, chloroplastic (519 aa).

Residue Asp11 coordinates Mg(2+). Thiamine diphosphate contacts are provided by Gly12 and Asn41. Residues Asn41 and Ile43 each contribute to the Mg(2+) site. His118 contacts thiamine diphosphate. 3 residues coordinate substrate: His118, Arg212, and Ser239. Thiamine diphosphate is bound by residues Glu266 and Phe293. Glu266 serves as the catalytic Proton donor. Residues His317, Asp325, and Arg376 each coordinate substrate.

Belongs to the transketolase family. In terms of assembly, homodimer. It depends on Mg(2+) as a cofactor. Ca(2+) is required as a cofactor. Mn(2+) serves as cofactor. Requires Co(2+) as cofactor. The cofactor is thiamine diphosphate. As to expression, constitutively expressed in leaves and roots.

Its subcellular location is the plastid. It localises to the chloroplast. It catalyses the reaction D-sedoheptulose 7-phosphate + D-glyceraldehyde 3-phosphate = aldehydo-D-ribose 5-phosphate + D-xylulose 5-phosphate. Catalyzes the transfer of a two-carbon ketol group from a ketose donor to an aldose acceptor, via a covalent intermediate with the cofactor thiamine pyrophosphate. In Craterostigma plantagineum (Blue gem), this protein is Transketolase, chloroplastic (TKT3).